Here is a 123-residue protein sequence, read N- to C-terminus: uncharacterized protein (123 aa).

Residues 5 to 25 traverse the membrane as a helical segment; sequence GTLVIIFAIVLILCIMLLFFY. Positions 32–53 are disordered; sequence KSGVLPPPIPPPTPPPPKKKYD. Residues 36-47 show a composition bias toward pro residues; it reads LPPPIPPPTPPP.

Belongs to the asfivirus CP123L family.

The protein localises to the host membrane. Its subcellular location is the virion. This is an uncharacterized protein from Ornithodoros (relapsing fever ticks).